The primary structure comprises 247 residues: Transmembrane protein 33 (247 aa).

The residue at position 2 (Ala2) is an N-acetylalanine. At 2-31 (ADTTPNGPQGAGAVQFMMTNKLDTAMWLSR) the chain is on the lumenal side. The helical transmembrane segment at 32–52 (LFTVYCSALFVLPLLGLHEAA) threads the bilayer. The Cytoplasmic portion of the chain corresponds to 53-100 (SFYQRALLANALTSALRLHQRLPHFQLSRAFLAQALLEDSCHYLLYSL). Residues 101 to 121 (IFVNSYPVTMSIFPVLLFSLL) traverse the membrane as a helical segment. Residues 122–155 (HAATYTKKVLDARGSNSLPLLRSVLDKLSANQQN) are Lumenal-facing. Residues 156-176 (ILKFIACNEIFLMPATVFMLF) traverse the membrane as a helical segment. The Cytoplasmic portion of the chain corresponds to 177-247 (SGQGSLLQPF…FISRLAPTVP (71 aa)).

It belongs to the PER33/POM33 family. Interacts with EIF2AK3. Interacts with ARL6IP1, isoform RTN1-A of RTN1, isoform RTN2-B of RTN2, isoform 3 of RTN3 and isoform 3 of RTN4. Interacts with RNF5. Interacts with RNF26. Interacts with PKD2. Prostate cancer and several cancer cell lines (at protein level). Widely expressed. Expressed at higher levels in endocrine-resistant breast cancer cells as compared to endocrine-sensitive breast cancer cells. Expressed at higher levels in early recurrence breast cancer tissues as compared to non-recurrent breast tumors.

The protein resides in the endoplasmic reticulum membrane. It is found in the melanosome. Its subcellular location is the nucleus envelope. Its function is as follows. Acts as a regulator of the tubular endoplasmic reticulum (ER) network by modulating intracellular calcium homeostasis. Mechanistically, stimulates PKD2 calcium-dependent activity. Suppresses the RTN3/4-induced formation of the ER tubules. Positively regulates PERK-mediated and IRE1-mediated unfolded protein response signaling. Plays an essential role in VEGF-mediated release of Ca(2+) from ER stores during angiogenesis. Also plays a role in the modulation of innate immune signaling through the cGAS-STING pathway by interacting with RNF26. Participates in lipid metabolism by acting as a downstream effector of the pyruvate kinase/PKM. Forms a complex with RNF5 to facilitate polyubiquitination and subsequent degradation of SCAP on the ER membrane. The polypeptide is Transmembrane protein 33 (TMEM33) (Homo sapiens (Human)).